The following is a 290-amino-acid chain: 4-diphosphocytidyl-2-C-methyl-D-erythritol kinase (290 aa).

The active site involves lysine 20. 104 to 114 (PMGGGLGGGSS) is an ATP binding site. Aspartate 146 is an active-site residue.

Belongs to the GHMP kinase family. IspE subfamily.

The enzyme catalyses 4-CDP-2-C-methyl-D-erythritol + ATP = 4-CDP-2-C-methyl-D-erythritol 2-phosphate + ADP + H(+). The protein operates within isoprenoid biosynthesis; isopentenyl diphosphate biosynthesis via DXP pathway; isopentenyl diphosphate from 1-deoxy-D-xylulose 5-phosphate: step 3/6. Catalyzes the phosphorylation of the position 2 hydroxy group of 4-diphosphocytidyl-2C-methyl-D-erythritol. This Shewanella frigidimarina (strain NCIMB 400) protein is 4-diphosphocytidyl-2-C-methyl-D-erythritol kinase.